The sequence spans 599 residues: Putative sensor histidine kinase NtrY-like (599 aa).

The next 4 helical transmembrane spans lie at 17–37 (ILIL…FYVI), 44–64 (FSTI…LGIL), 85–105 (IVIA…VFSV), and 285–305 (IMFI…GVLF). In terms of domain architecture, HAMP spans 307 to 361 (AKIVKPIKKLVTATDKVKDGDLTVQVPENEVDKDEIGTLYAAFNRMIKQLSRQQR). Residues 378 to 589 (KVAHEIKNPL…IIDIKFDLKE (212 aa)) form the Histidine kinase domain. Position 381 is a phosphohistidine; by autocatalysis (histidine 381).

It is found in the cell membrane. The enzyme catalyses ATP + protein L-histidine = ADP + protein N-phospho-L-histidine.. Functionally, member of the two-component regulatory system RP614/RP562. The sequence is that of Putative sensor histidine kinase NtrY-like from Rickettsia prowazekii (strain Madrid E).